We begin with the raw amino-acid sequence, 203 residues long: ATP synthase subunit delta, chloroplastic (203 aa).

This sequence belongs to the ATPase delta chain family. As to quaternary structure, F-type ATPases have 2 components, F(1) - the catalytic core - and F(0) - the membrane proton channel. F(1) has five subunits: alpha(3), beta(3), gamma(1), delta(1), epsilon(1). CF(0) has four main subunits: a(1), b(1), b'(1) and c(10-14). The alpha and beta chains form an alternating ring which encloses part of the gamma chain. F(1) is attached to F(0) by a central stalk formed by the gamma and epsilon chains, while a peripheral stalk is formed by the delta, b and b' chains.

It localises to the plastid. The protein localises to the chloroplast thylakoid membrane. In terms of biological role, f(1)F(0) ATP synthase produces ATP from ADP in the presence of a proton or sodium gradient. F-type ATPases consist of two structural domains, F(1) containing the extramembraneous catalytic core and F(0) containing the membrane proton channel, linked together by a central stalk and a peripheral stalk. During catalysis, ATP synthesis in the catalytic domain of F(1) is coupled via a rotary mechanism of the central stalk subunits to proton translocation. This protein is part of the stalk that links CF(0) to CF(1). It either transmits conformational changes from CF(0) to CF(1) or is implicated in proton conduction. This Heterosigma akashiwo (strain NIES-293 / 8280G21-1) protein is ATP synthase subunit delta, chloroplastic.